A 612-amino-acid polypeptide reads, in one-letter code: Protein hinderin (612 aa).

A Phosphoserine modification is found at S20. Positions 90–166 (LKDLCLEDKR…CQELLSLYQK (77 aa)) form a coiled coil. Phosphoserine is present on S178. A coiled-coil region spans residues 362–406 (IEKQLSEDRRQQLMLQKMELEIEKERLQHLLAQQETKLLLKQQQL). The segment covering 462-477 (STSFKKCPDSPNSGQN) has biased composition (polar residues). Disordered regions lie at residues 462–484 (STSF…KKTV) and 509–598 (ETVT…RSPE). 3 positions are modified to phosphoserine: S471, S527, and S558. Composition is skewed to polar residues over residues 555–568 (QSLS…SQPH) and 575–585 (TWSTLRPTPQK).

Interacts (via N- and C-terminal domains) with SMC3 (via central hinge region).

Its function is as follows. Competes with SMC1 for binding to SMC3. May affect the availability of SMC3 to engage in the formation of multimeric protein complexes. In Mus musculus (Mouse), this protein is Protein hinderin (Kiaa1328).